We begin with the raw amino-acid sequence, 533 residues long: Atypical kinase COQ8B, mitochondrial (533 aa).

Residues 93 to 109 (LASFGGLAVGLGLGALA) traverse the membrane as a helical segment. The KxGQ motif signature appears at 156-159 (KIGQ). Residues 192 to 424 (MMRVLEEELG…DRVLQKSQDL (233 aa)) enclose the Protein kinase domain. Residues 217-220 (AAAS) carry the AAAS motif motif. Residues serine 220, lysine 238, and 325–328 (MELA) each bind ATP. The active-site Proton acceptor is aspartate 368. Residues asparagine 373 and aspartate 387 each contribute to the ATP site.

This sequence belongs to the protein kinase superfamily. ADCK protein kinase family. As to quaternary structure, homodimer; homodimerizes via its transmembrane region. Interacts with COQ6 and COQ7. Interacts with the multi-subunit COQ enzyme complex, composed of at least COQ3, COQ4, COQ5, COQ6, COQ7 and COQ9.

It localises to the mitochondrion membrane. It is found in the cytoplasm. The protein localises to the cytosol. The protein resides in the cell membrane. Its pathway is cofactor biosynthesis; ubiquinone biosynthesis. Atypical kinase involved in the biosynthesis of coenzyme Q, also named ubiquinone, an essential lipid-soluble electron transporter for aerobic cellular respiration. Its substrate specificity is still unclear: may act as a protein kinase that mediates phosphorylation of COQ3. According to other reports, acts as a small molecule kinase, possibly a lipid kinase that phosphorylates a prenyl lipid in the ubiquinone biosynthesis pathway, as suggested by its ability to bind coenzyme Q lipid intermediates. However, the small molecule kinase activity was not confirmed by another publication. Required for podocyte migration. This is Atypical kinase COQ8B, mitochondrial from Mus musculus (Mouse).